Here is a 121-residue protein sequence, read N- to C-terminus: Fluoride-specific ion channel FluC 1 (121 aa).

The next 4 helical transmembrane spans lie at 3 to 23, 29 to 49, 67 to 87, and 92 to 112; these read YLYIFVGGALGALIRFCLSML, IPLGTFVANLLGAFLMGSIGA, TGLLGALTTFSTFQFELVTLF, and FILFTIYGVTSYILGILSCYL. Na(+) is bound by residues glycine 71 and threonine 74.

This sequence belongs to the fluoride channel Fluc/FEX (TC 1.A.43) family.

It localises to the cell membrane. The catalysed reaction is fluoride(in) = fluoride(out). Na(+) is not transported, but it plays an essential structural role and its presence is essential for fluoride channel function. In terms of biological role, fluoride-specific ion channel. Important for reducing fluoride concentration in the cell, thus reducing its toxicity. This is Fluoride-specific ion channel FluC 1 from Staphylococcus epidermidis (strain ATCC 35984 / DSM 28319 / BCRC 17069 / CCUG 31568 / BM 3577 / RP62A).